The sequence spans 287 residues: AA9 family lytic polysaccharide monooxygenase C (287 aa).

An N-terminal signal peptide occupies residues 1 to 16 (MKSVLVALATATAVSA). Residue His17 coordinates Cu(2+). Asn22 carries N-linked (GlcNAc...) asparagine glycosylation. Cystine bridges form between Cys77-Cys230 and Cys200-Cys284. Position 114 (His114) interacts with Cu(2+). The O2 site is built by His216 and Gln225. Tyr227 contributes to the Cu(2+) binding site.

The protein belongs to the polysaccharide monooxygenase AA9 family. Cu(2+) is required as a cofactor.

It is found in the secreted. It catalyses the reaction [(1-&gt;4)-beta-D-glucosyl]n+m + reduced acceptor + O2 = 4-dehydro-beta-D-glucosyl-[(1-&gt;4)-beta-D-glucosyl]n-1 + [(1-&gt;4)-beta-D-glucosyl]m + acceptor + H2O.. Its function is as follows. Lytic polysaccharide monooxygenase (LPMO) that depolymerizes crystalline and amorphous polysaccharides via the oxidation of scissile alpha- or beta-(1-4)-glycosidic bonds, yielding C1 or C4 oxidation products. Catalysis by LPMOs requires the reduction of the active-site copper from Cu(II) to Cu(I) by a reducing agent and H(2)O(2) or O(2) as a cosubstrate. The polypeptide is AA9 family lytic polysaccharide monooxygenase C (Podospora anserina (strain S / ATCC MYA-4624 / DSM 980 / FGSC 10383) (Pleurage anserina)).